The chain runs to 375 residues: Biotin synthase, mitochondrial (375 aa).

A mitochondrion-targeting transit peptide spans 1 to 16; sequence MMSTIYRHLSTARPAL. In terms of domain architecture, Radical SAM core spans 81 to 310; that stretch reads HDPTKVQLCT…IATARIVMPK (230 aa). Residues C99, C103, and C106 each contribute to the [4Fe-4S] cluster site. The [2Fe-2S] cluster site is built by C143, C176, C236, and R314.

This sequence belongs to the radical SAM superfamily. Biotin synthase family. [4Fe-4S] cluster serves as cofactor. The cofactor is [2Fe-2S] cluster.

It localises to the mitochondrion. It catalyses the reaction (4R,5S)-dethiobiotin + (sulfur carrier)-SH + 2 reduced [2Fe-2S]-[ferredoxin] + 2 S-adenosyl-L-methionine = (sulfur carrier)-H + biotin + 2 5'-deoxyadenosine + 2 L-methionine + 2 oxidized [2Fe-2S]-[ferredoxin]. It functions in the pathway cofactor biosynthesis; biotin biosynthesis; biotin from 7,8-diaminononanoate: step 2/2. The sequence is that of Biotin synthase, mitochondrial (BIO2) from Saccharomyces cerevisiae (strain ATCC 204508 / S288c) (Baker's yeast).